We begin with the raw amino-acid sequence, 230 residues long: UPF0173 metal-dependent hydrolase MK1542 (230 aa).

It belongs to the UPF0173 family.

This Methanopyrus kandleri (strain AV19 / DSM 6324 / JCM 9639 / NBRC 100938) protein is UPF0173 metal-dependent hydrolase MK1542.